Here is a 313-residue protein sequence, read N- to C-terminus: Probable WRKY transcription factor 41 (313 aa).

The segment at residues 135-203 (GLEGPHDDIF…YRGTHTCSQG (69 aa)) is a DNA-binding region (WRKY).

This sequence belongs to the WRKY group III family.

It localises to the nucleus. In terms of biological role, transcription factor. Interacts specifically with the W box (5'-(T)TGAC[CT]-3'), a frequently occurring elicitor-responsive cis-acting element. The sequence is that of Probable WRKY transcription factor 41 (WRKY41) from Arabidopsis thaliana (Mouse-ear cress).